Consider the following 453-residue polypeptide: Alpha-2B adrenergic receptor (453 aa).

Residues 1 to 17 are Extracellular-facing; it reads MSGPTMDHQEPYSVQAT. Residues 18 to 42 traverse the membrane as a helical segment; that stretch reads AAIASAITFLILFTIFGNALVILAV. Residues 43–54 are Cytoplasmic-facing; sequence LTSRSLRAPQNL. The chain crosses the membrane as a helical span at residues 55–80; that stretch reads FLVSLAAADILVATLIIPFSLANELL. Topologically, residues 81–90 are extracellular; the sequence is GYWYFWRAWC. C90 and C169 form a disulfide bridge. Residues 91 to 113 form a helical membrane-spanning segment; the sequence is EVYLALDVLFCTSSIVHLCAISL. Residues 114–135 lie on the Cytoplasmic side of the membrane; the sequence is DRYWAVSRALEYNSKRTPRRIK. A helical membrane pass occupies residues 136–158; sequence CIILTVWLIAAVISLPPLIYKGD. The Extracellular portion of the chain corresponds to 159–174; the sequence is QRPEPRGLPQCELNQE. A helical membrane pass occupies residues 175 to 198; the sequence is AWYILASSIGSFFAPCLIMILVYL. Topologically, residues 199–375 are cytoplasmic; that stretch reads RIYVIAKRSH…LSREKRFTFV (177 aa). The tract at residues 213–331 is disordered; the sequence is GAKRGSGEGE…PASVCNPPLQ (119 aa). The span at 287–297 shows a compositional bias: polar residues; sequence GQGQKKGTSGA. The segment covering 300-314 has biased composition (acidic residues); that stretch reads EEGDEEDEEEVEECE. A helical transmembrane segment spans residues 376-399; it reads LAVVIGVFVVCWFPFFFSYSLGAI. At 400 to 408 the chain is on the extracellular side; that stretch reads CPQHCKVPH. The chain crosses the membrane as a helical span at residues 409-432; sequence GLFQFFFWIGYCNSSLNPVIYTVF. Topologically, residues 433-453 are cytoplasmic; that stretch reads NQDFRRAFRRILCRPWTQTGW. The S-palmitoyl cysteine moiety is linked to residue C445.

This sequence belongs to the G-protein coupled receptor 1 family. Adrenergic receptor subfamily. ADRA2B sub-subfamily. Interacts with RAB26. Interacts with PPP1R9B. Interacts with GGA1, GGA2 and GGA3.

It is found in the cell membrane. Alpha-2 adrenergic receptors mediate the catecholamine-induced inhibition of adenylate cyclase through the action of G proteins. The chain is Alpha-2B adrenergic receptor (Adra2b) from Rattus norvegicus (Rat).